A 1250-amino-acid polypeptide reads, in one-letter code: Probable autotransporter YfaL (1250 aa).

Residues M1–A28 form the signal peptide. Residues R914–Q951 are disordered. Residues T919–P920 form repeat 1. Residues T919 to P948 form a 15 X 2 AA approximate tandem repeats of [DTPE]-P region. Residues P921–S922 form a 2; approximate repeat. The stretch at P923–P924 is repeat 3. One copy of the 4; approximate repeat lies at D925–P926. 11 tandem repeats follow at residues D927–P928, T929–P930, D931–P932, D933–P934, T935–P936, D937–P938, D939–P940, T941–P942, D943–P944, E945–P946, and T947–P948. Residues P928 to P942 show a composition bias toward acidic residues. Residues A980–W1250 form the Autotransporter domain.

In terms of processing, an approximately 170 kDa protein is detected in the outer membrane, while a C-terminal 55 kDa fragment is detected in whole cells. The full-length putative autotransporter may be cleaved to release the mature protein from the outer membrane; Pefabloc SC, a Ser-Thr protease inhibitor prevents the appearance of the 55 kDa C--terminal fragment.

Its subcellular location is the periplasm. It is found in the secreted. It localises to the cell surface. The protein localises to the cell outer membrane. In terms of biological role, probably an autotransporter. Upon overexpression shows increased adherence to polyvinyl chloride (PVC) plates, increased mature biofilm formation. The polypeptide is Probable autotransporter YfaL (yfaL) (Escherichia coli (strain K12)).